We begin with the raw amino-acid sequence, 570 residues long: Potassium-transporting ATPase potassium-binding subunit (570 aa).

The next 11 membrane-spanning stretches (helical) occupy residues Ala-7–Leu-27, Ala-65–Leu-85, Pro-95–Thr-115, Leu-135–Leu-155, Leu-179–Pro-199, Leu-254–Phe-274, Ala-286–Glu-306, Gly-383–Gly-403, Ile-422–Leu-442, Leu-489–Gly-509, and Gly-528–Phe-548.

It belongs to the KdpA family. In terms of assembly, the system is composed of three essential subunits: KdpA, KdpB and KdpC.

It localises to the cell inner membrane. In terms of biological role, part of the high-affinity ATP-driven potassium transport (or Kdp) system, which catalyzes the hydrolysis of ATP coupled with the electrogenic transport of potassium into the cytoplasm. This subunit binds the periplasmic potassium ions and delivers the ions to the membrane domain of KdpB through an intramembrane tunnel. This is Potassium-transporting ATPase potassium-binding subunit from Caulobacter vibrioides (strain ATCC 19089 / CIP 103742 / CB 15) (Caulobacter crescentus).